The following is a 494-amino-acid chain: Guanosine-5'-triphosphate,3'-diphosphate pyrophosphatase (494 aa).

It belongs to the GppA/Ppx family. GppA subfamily.

The catalysed reaction is guanosine 3'-diphosphate 5'-triphosphate + H2O = guanosine 3',5'-bis(diphosphate) + phosphate + H(+). Its pathway is purine metabolism; ppGpp biosynthesis; ppGpp from GTP: step 2/2. Functionally, catalyzes the conversion of pppGpp to ppGpp. Guanosine pentaphosphate (pppGpp) is a cytoplasmic signaling molecule which together with ppGpp controls the 'stringent response', an adaptive process that allows bacteria to respond to amino acid starvation, resulting in the coordinated regulation of numerous cellular activities. This chain is Guanosine-5'-triphosphate,3'-diphosphate pyrophosphatase, found in Escherichia fergusonii (strain ATCC 35469 / DSM 13698 / CCUG 18766 / IAM 14443 / JCM 21226 / LMG 7866 / NBRC 102419 / NCTC 12128 / CDC 0568-73).